The sequence spans 234 residues: Flagellar L-ring protein (234 aa).

The first 15 residues, 1–15, serve as a signal peptide directing secretion; the sequence is MRYAVICMLLLAASG. C16 carries N-palmitoyl cysteine lipidation. C16 is lipidated: S-diacylglycerol cysteine.

Belongs to the FlgH family. In terms of assembly, the basal body constitutes a major portion of the flagellar organelle and consists of four rings (L,P,S, and M) mounted on a central rod.

The protein resides in the cell outer membrane. Its subcellular location is the bacterial flagellum basal body. Its function is as follows. Assembles around the rod to form the L-ring and probably protects the motor/basal body from shearing forces during rotation. This Oleidesulfovibrio alaskensis (strain ATCC BAA-1058 / DSM 17464 / G20) (Desulfovibrio alaskensis) protein is Flagellar L-ring protein.